A 661-amino-acid polypeptide reads, in one-letter code: WD repeat-containing protein 26 (661 aa).

A compositionally biased stretch (gly residues) spans 1 to 27; that stretch reads MQANGAGGGGGGGGGGGGGGGGGGGQG. Disordered stretches follow at residues 1 to 70 and 99 to 118; these read MQAN…ASNN and TAASSSLATPELGSSLKKKK. 2 stretches are compositionally biased toward low complexity: residues 56 to 70 and 99 to 113; these read ANGLLPSAPSAASNN and TAASSSLATPELGSS. Ser-121 and Ser-123 each carry phosphoserine. In terms of domain architecture, LisH spans 123 to 155; sequence SDEDVIRLIGQHLNGLGLNQTVDLLMQESGCRL. One can recognise a CTLH domain in the interval 156-231; sequence EHPSATKFRN…EYLEDGKVLE (76 aa). 6 WD repeats span residues 353–392, 399–438, 444–484, 524–563, 566–608, and 611–651; these read EHCNEVWFCKFSNDGTKLATGSKDTTVIIWQVDPDTHLLK, GHAYGVSYIAWSPDDNYLVACGPDDCSELWLWNVQTGELR, SHED…DSWE, QEDHPIMSFTISKNGRLALLNVATQGVHLWDLQDRVLVRK, GVTQ…PIAE, and GHTR…DHQN.

In terms of assembly, forms homooligomers. Identified in the CTLH complex that contains GID4, RANBP9 and/or RANBP10, MKLN1, MAEA, RMND5A (or alternatively its paralog RMND5B), GID8, ARMC8, WDR26 and YPEL5. Within this complex, MAEA, RMND5A (or alternatively its paralog RMND5B), GID8, WDR26, and RANBP9 and/or RANBP10 form the catalytic core, while GID4, MKLN1, ARMC8 and YPEL5 have ancillary roles. Interacts with DDB1-CUL4A/B E3 ligase complexes. Forms a complex composed of at least WDR26, a G-beta:gamma unit, and PLCB2. Interacts with AXIN1. In terms of tissue distribution, broadly expressed, with highest levels in heart and skeletal muscle.

The protein resides in the cytoplasm. It is found in the nucleus. Its subcellular location is the mitochondrion. Functionally, G-beta-like protein involved in cell signal transduction. Acts as a negative regulator in MAPK signaling pathway. Functions as a scaffolding protein to promote G beta:gamma-mediated PLCB2 plasma membrane translocation and subsequent activation in leukocytes. Core component of the CTLH E3 ubiquitin-protein ligase complex that selectively accepts ubiquitin from UBE2H and mediates ubiquitination and subsequent proteasomal degradation of the transcription factor HBP1. Acts as a negative regulator of the canonical Wnt signaling pathway through preventing ubiquitination of beta-catenin CTNNB1 by the beta-catenin destruction complex, thus negatively regulating CTNNB1 degradation. Serves as a scaffold to coordinate PI3K/AKT pathway-driven cell growth and migration. Protects cells from oxidative stress-induced apoptosis via the down-regulation of AP-1 transcriptional activity as well as by inhibiting cytochrome c release from mitochondria. Also protects cells by promoting hypoxia-mediated autophagy and mitophagy. The polypeptide is WD repeat-containing protein 26 (WDR26) (Homo sapiens (Human)).